Here is a 412-residue protein sequence, read N- to C-terminus: Tyrosine--tRNA ligase (412 aa).

Tyr-31 provides a ligand contact to L-tyrosine. Residues 36 to 45 (PTAPSLHIGH) carry the 'HIGH' region motif. 2 residues coordinate L-tyrosine: Tyr-162 and Gln-166. Positions 222-226 (KIGKT) match the 'KMSKS' region motif. Lys-225 provides a ligand contact to ATP. Residues 345-412 (KRWLDVVVQL…KKKKQVIDLN (68 aa)) form the S4 RNA-binding domain.

Belongs to the class-I aminoacyl-tRNA synthetase family. TyrS type 1 subfamily. Homodimer.

The protein resides in the cytoplasm. It carries out the reaction tRNA(Tyr) + L-tyrosine + ATP = L-tyrosyl-tRNA(Tyr) + AMP + diphosphate + H(+). In terms of biological role, catalyzes the attachment of tyrosine to tRNA(Tyr) in a two-step reaction: tyrosine is first activated by ATP to form Tyr-AMP and then transferred to the acceptor end of tRNA(Tyr). This chain is Tyrosine--tRNA ligase, found in Chlamydia muridarum (strain MoPn / Nigg).